Here is a 276-residue protein sequence, read N- to C-terminus: Large ribosomal subunit protein uL2cy (276 aa).

2 disordered regions span residues 1–25 and 225–276; these read MAIHLYKTSTPSTRNGTVDSQVKSN and MNPV…RRSK. Residues 7-25 show a composition bias toward polar residues; the sequence is KTSTPSTRNGTVDSQVKSN.

This sequence belongs to the universal ribosomal protein uL2 family. Part of the 50S ribosomal subunit.

It is found in the plastid. The protein localises to the chloroplast. This is Large ribosomal subunit protein uL2cy (rpl2-B) from Coffea arabica (Arabian coffee).